The sequence spans 286 residues: Acetyl-coenzyme A carboxylase carboxyl transferase subunit beta (286 aa).

A CoA carboxyltransferase N-terminal domain is found at leucine 27–isoleucine 286. Residues cysteine 31, cysteine 34, cysteine 50, and cysteine 52 each contribute to the Zn(2+) site. The C4-type zinc-finger motif lies at cysteine 31–cysteine 52.

It belongs to the AccD/PCCB family. Acetyl-CoA carboxylase is a heterohexamer composed of biotin carboxyl carrier protein (AccB), biotin carboxylase (AccC) and two subunits each of ACCase subunit alpha (AccA) and ACCase subunit beta (AccD). Zn(2+) serves as cofactor.

The protein resides in the cytoplasm. It catalyses the reaction N(6)-carboxybiotinyl-L-lysyl-[protein] + acetyl-CoA = N(6)-biotinyl-L-lysyl-[protein] + malonyl-CoA. The protein operates within lipid metabolism; malonyl-CoA biosynthesis; malonyl-CoA from acetyl-CoA: step 1/1. In terms of biological role, component of the acetyl coenzyme A carboxylase (ACC) complex. Biotin carboxylase (BC) catalyzes the carboxylation of biotin on its carrier protein (BCCP) and then the CO(2) group is transferred by the transcarboxylase to acetyl-CoA to form malonyl-CoA. In Exiguobacterium sibiricum (strain DSM 17290 / CCUG 55495 / CIP 109462 / JCM 13490 / 255-15), this protein is Acetyl-coenzyme A carboxylase carboxyl transferase subunit beta.